The chain runs to 144 residues: Large-conductance mechanosensitive channel (144 aa).

2 helical membrane-spanning segments follow: residues Val-14–Phe-34 and Gly-81–Ile-101.

The protein belongs to the MscL family. Homopentamer.

The protein resides in the cell inner membrane. Functionally, channel that opens in response to stretch forces in the membrane lipid bilayer. May participate in the regulation of osmotic pressure changes within the cell. The polypeptide is Large-conductance mechanosensitive channel (Bdellovibrio bacteriovorus (strain ATCC 15356 / DSM 50701 / NCIMB 9529 / HD100)).